A 117-amino-acid polypeptide reads, in one-letter code: Immunoglobulin heavy variable 1-69-2 (117 aa).

An N-terminal signal peptide occupies residues 1 to 19; that stretch reads MDCTWRILLLVAAATGTHA. The tract at residues 20–44 is framework-1; sequence EVQLVQSGAEVKKPGATVKISCKVS. The Ig-like domain occupies 20 to 117; sequence EVQLVQSGAE…EDTAVYYCAT (98 aa). A disulfide bond links Cys41 and Cys115. The complementarity-determining-1 stretch occupies residues 45-52; sequence GYTFTDYY. Positions 53 to 69 are framework-2; that stretch reads MHWVQQAPGKGLEWMGL. The tract at residues 70–77 is complementarity-determining-2; the sequence is VDPEDGET. Residues 78–115 are framework-3; the sequence is IYAEKFQGRVTITADTSTDTAYMELSSLRSEDTAVYYC. The segment at 116-117 is complementarity-determining-3; that stretch reads AT.

As to quaternary structure, immunoglobulins are composed of two identical heavy chains and two identical light chains; disulfide-linked.

Its subcellular location is the secreted. The protein resides in the cell membrane. V region of the variable domain of immunoglobulin heavy chains that participates in the antigen recognition. Immunoglobulins, also known as antibodies, are membrane-bound or secreted glycoproteins produced by B lymphocytes. In the recognition phase of humoral immunity, the membrane-bound immunoglobulins serve as receptors which, upon binding of a specific antigen, trigger the clonal expansion and differentiation of B lymphocytes into immunoglobulins-secreting plasma cells. Secreted immunoglobulins mediate the effector phase of humoral immunity, which results in the elimination of bound antigens. The antigen binding site is formed by the variable domain of one heavy chain, together with that of its associated light chain. Thus, each immunoglobulin has two antigen binding sites with remarkable affinity for a particular antigen. The variable domains are assembled by a process called V-(D)-J rearrangement and can then be subjected to somatic hypermutations which, after exposure to antigen and selection, allow affinity maturation for a particular antigen. This Homo sapiens (Human) protein is Immunoglobulin heavy variable 1-69-2.